A 327-amino-acid polypeptide reads, in one-letter code: Zinc transport protein ZntB (327 aa).

Over 1 to 271 (MDVVEGKALQ…AMNRRTYTMS (271 aa)) the chain is Cytoplasmic. The chain crosses the membrane as a helical span at residues 272–292 (LLAMVFLPTTFLTGLFGVNLG). Over 293–300 (GIPGNTDA) the chain is Periplasmic. The helical transmembrane segment at 301 to 321 (FGFTIFCMMLVVLVLSVAWWL) threads the bilayer. The Cytoplasmic portion of the chain corresponds to 322-327 (KRSKWL).

It belongs to the CorA metal ion transporter (MIT) (TC 1.A.35) family.

The protein localises to the cell inner membrane. The catalysed reaction is Zn(2+)(out) + H(+)(out) = Zn(2+)(in) + H(+)(in). Zinc transporter. Acts as a Zn(2+):proton symporter, which likely mediates zinc ion uptake. This Yersinia pseudotuberculosis serotype O:1b (strain IP 31758) protein is Zinc transport protein ZntB.